The chain runs to 112 residues: Putative RNase TTE0752 (112 aa).

Residues R74 and H79 contribute to the active site. An RX(4)HXY motif motif is present at residues 74-81 (RDKLIHEY). Position 81 is an O-di-AMP-tyrosine (Y81).

The protein belongs to the HepT RNase toxin family. In terms of assembly, homodimer, probably forms a complex with cognate antitoxin TTE0751. Post-translationally, modified by cognate antitoxin TTE0751; probably at least 2 successive AMPylation events occur on Tyr-81.

In terms of biological role, probable toxic component of a putative type VII toxin-antitoxin (TA) system, probably an RNase. Probably neutralized by cognate antitoxin TTE0751. Neutralization may be due to AMPylation by TTE0751. The protein is Putative RNase TTE0752 of Caldanaerobacter subterraneus subsp. tengcongensis (strain DSM 15242 / JCM 11007 / NBRC 100824 / MB4) (Thermoanaerobacter tengcongensis).